The chain runs to 143 residues: Large ribosomal subunit protein uL16 (143 aa).

The disordered stretch occupies residues 1-26; it reads MSMALLPRRVKYRKSQRGSRKGNATR. Positions 8-20 are enriched in basic residues; sequence RRVKYRKSQRGSR.

Belongs to the universal ribosomal protein uL16 family. In terms of assembly, part of the 50S ribosomal subunit.

Functionally, binds 23S rRNA and is also seen to make contacts with the A and possibly P site tRNAs. In Methylacidiphilum infernorum (isolate V4) (Methylokorus infernorum (strain V4)), this protein is Large ribosomal subunit protein uL16.